We begin with the raw amino-acid sequence, 174 residues long: uncharacterized protein (174 aa).

To E.coli HemX C-terminal region.

This is an uncharacterized protein from Haemophilus influenzae (strain ATCC 51907 / DSM 11121 / KW20 / Rd).